Reading from the N-terminus, the 449-residue chain is KICSTOR subunit 2 (449 aa).

The protein belongs to the KICS2 family. In terms of assembly, may be part of the KICSTOR complex.

The protein resides in the lysosome membrane. In terms of biological role, as part of the KICSTOR complex may function in the amino acid-sensing branch of the TORC1 signaling pathway. In Danio rerio (Zebrafish), this protein is KICSTOR subunit 2 (kics2).